The primary structure comprises 694 residues: Putative bifunctional polynucleotide kinase/RNA ligase (694 aa).

Positions 1 to 385 (MLHVSRLLAN…TKQALNNKLA (385 aa)) are ligase domain. A bifunctional 5'-OH polynucleotide kinase/polynucleotide 3'-phosphatase region spans residues 394 to 694 (KQLLVLIGIS…FNVCRDYLEF (301 aa)). Residue 401-408 (GISGSGKS) participates in ATP binding.

It carries out the reaction a 5'-end dephospho-2'-deoxyribonucleoside-DNA + ATP = a 5'-end 5'-phospho-2'-deoxyribonucleoside-DNA + ADP + H(+). The catalysed reaction is ATP + (ribonucleotide)n-3'-hydroxyl + 5'-phospho-(ribonucleotide)m = (ribonucleotide)n+m + AMP + diphosphate.. In terms of biological role, trifunctional enzyme that possesses a bifunctional polynucleotide kinase/phosphatase activity and an ATP-dependent RNA ligase activity. May therefore play a role to evade an RNA damage-based host response. The polypeptide is Putative bifunctional polynucleotide kinase/RNA ligase (PNK/PNL) (Autographa californica nuclear polyhedrosis virus (AcMNPV)).